A 715-amino-acid polypeptide reads, in one-letter code: MLPEEDLKIIKKELGREPTLVEQGCFLNLWSEHCSYRSSAPLLKTFTSKGENVIIGPGDDAAIIKFDDGYVLAIGMESHNHPSYVDPYNGAATGIGGIVRDIISMGARPIALMDPLYFGPLDTPKNMFLFEQIIKGIAGYGNCIGVPVVNGETFFDRRYSGNPLVNVVAVGLCREEEVITARSQKAGNKLVLAGSSTGKDGLGGASFASRDLSESAEAEDRPSVQVGDPYTEKLVIEMTLEAMEKGYIKSCKDLGAAGLGGASAELAAKGGLGAHITADAVTQREPNMNAYEILLAESQERMVFEVAPEDVDAVLALVAKYDLNGAVVGYLTEKPNYTVEFKGEVVVDIPIDFLTGGAPTCEKSSVAPIPQVEEGKAPKTPEDLKAAFLKVISSYNIASKEWIYRQYDHEVQLRTVIKPGEDAGVLKITDKKGLVLSCGCQPRATLLDPYNGGKNVVIENAMNLAVKGADGLAIVNCLNFGNPDRPEIYWQLKNSVLGLGDGARELSIPVVGGNVSLYNESDEFKTAILPTPSIGIIGKVNFETPLPSSFFAKSGDAIILVGETTADMGGSEYYACFEALNAGKVPSVPKNAPEIIKAVIEAARSGKLSSAHDLSLGGIAAGLARMCRNSGAKVDLSEVSELKAEELLFSEAPARALLATSEPEAVLEILKDVPHMVIGKVEGNSLEVKGKDFEISLSLKEISDAYSSLTRFMMR.

His-33 is a catalytic residue. Tyr-36 is a binding site for ATP. Glu-77 contributes to the Mg(2+) binding site. Substrate contacts are provided by residues 78 to 81 and Arg-100; that span reads SHNH. The active-site Proton acceptor is the His-79. Asp-101 serves as a coordination point for Mg(2+). Gln-225 provides a ligand contact to substrate. Residue Asp-253 participates in Mg(2+) binding. Residue 297-299 coordinates substrate; the sequence is ESQ. The ATP site is built by Asn-476 and Gly-513. A Mg(2+)-binding site is contributed by Asn-514. A substrate-binding site is contributed by Ser-516.

It belongs to the FGAMS family. In terms of assembly, monomer. Part of the FGAM synthase complex composed of 1 PurL, 1 PurQ and 2 PurS subunits.

Its subcellular location is the cytoplasm. It carries out the reaction N(2)-formyl-N(1)-(5-phospho-beta-D-ribosyl)glycinamide + L-glutamine + ATP + H2O = 2-formamido-N(1)-(5-O-phospho-beta-D-ribosyl)acetamidine + L-glutamate + ADP + phosphate + H(+). It participates in purine metabolism; IMP biosynthesis via de novo pathway; 5-amino-1-(5-phospho-D-ribosyl)imidazole from N(2)-formyl-N(1)-(5-phospho-D-ribosyl)glycinamide: step 1/2. Part of the phosphoribosylformylglycinamidine synthase complex involved in the purines biosynthetic pathway. Catalyzes the ATP-dependent conversion of formylglycinamide ribonucleotide (FGAR) and glutamine to yield formylglycinamidine ribonucleotide (FGAM) and glutamate. The FGAM synthase complex is composed of three subunits. PurQ produces an ammonia molecule by converting glutamine to glutamate. PurL transfers the ammonia molecule to FGAR to form FGAM in an ATP-dependent manner. PurS interacts with PurQ and PurL and is thought to assist in the transfer of the ammonia molecule from PurQ to PurL. The protein is Phosphoribosylformylglycinamidine synthase subunit PurL of Methanosarcina barkeri (strain Fusaro / DSM 804).